We begin with the raw amino-acid sequence, 468 residues long: Ribulose bisphosphate carboxylase large chain (468 aa).

Lys-4 carries the post-translational modification N6,N6,N6-trimethyllysine. Substrate contacts are provided by Asn-113 and Thr-163. Catalysis depends on Lys-165, which acts as the Proton acceptor. Lys-167 contacts substrate. Mg(2+) is bound by residues Lys-191, Asp-193, and Glu-194. Lys-191 is subject to N6-carboxylysine. His-284 functions as the Proton acceptor in the catalytic mechanism. Substrate is bound by residues Arg-285, His-317, and Ser-369.

This sequence belongs to the RuBisCO large chain family. Type I subfamily. As to quaternary structure, heterohexadecamer of 8 large chains and 8 small chains; disulfide-linked. The disulfide link is formed within the large subunit homodimers. Mg(2+) serves as cofactor. In terms of processing, the disulfide bond which can form in the large chain dimeric partners within the hexadecamer appears to be associated with oxidative stress and protein turnover.

Its subcellular location is the plastid. It is found in the chloroplast. The catalysed reaction is 2 (2R)-3-phosphoglycerate + 2 H(+) = D-ribulose 1,5-bisphosphate + CO2 + H2O. It catalyses the reaction D-ribulose 1,5-bisphosphate + O2 = 2-phosphoglycolate + (2R)-3-phosphoglycerate + 2 H(+). In terms of biological role, ruBisCO catalyzes two reactions: the carboxylation of D-ribulose 1,5-bisphosphate, the primary event in carbon dioxide fixation, as well as the oxidative fragmentation of the pentose substrate in the photorespiration process. Both reactions occur simultaneously and in competition at the same active site. The chain is Ribulose bisphosphate carboxylase large chain from Pandorea jasminoides (Bower vine).